Consider the following 461-residue polypeptide: SWM histone demethylase complex subunit phf1 (461 aa).

Residues 79–130 (PYGGMTMPASSSSGATSVPPEQDPSLSVSFNRLPKSASTKTKNGRIRSSRRE) are disordered. A compositionally biased stretch (polar residues) spans 102 to 119 (PSLSVSFNRLPKSASTKT). The segment at 190–246 (VTLCSVCQRGHSPLSNRIVFCDGCNSPYHQLCHHPPIDDATVQDVDAEWFCMKCQYR) adopts a PHD-type zinc-finger fold.

Component of the SWM histone demethylase complex composed of at least lsd1, lsd2, phf1 and phf2.

It localises to the nucleus. Functionally, component of the SWM histone demethylase complex that specifically demethylates H3K9me2, a specific tag for epigenetic transcriptional activation, thereby acting as a corepressor. Has a role in regulating heterochromatin propagation and euchromatic transcription. The chain is SWM histone demethylase complex subunit phf1 (phf1) from Schizosaccharomyces pombe (strain 972 / ATCC 24843) (Fission yeast).